Here is a 281-residue protein sequence, read N- to C-terminus: DegV domain-containing protein CPE2509 (281 aa).

The DegV domain occupies 4 to 279; sequence IAIITDSSCD…PGMVGVSIQK (276 aa). Hexadecanoate-binding residues include Thr60 and Ser93.

Functionally, may bind long-chain fatty acids, such as palmitate, and may play a role in lipid transport or fatty acid metabolism. The protein is DegV domain-containing protein CPE2509 of Clostridium perfringens (strain 13 / Type A).